The primary structure comprises 493 residues: V-type proton ATPase subunit B (493 aa).

The protein belongs to the ATPase alpha/beta chains family. V-ATPase is a heteromultimeric enzyme composed of a peripheral catalytic V1 complex (main components: subunits A, B, C, D, E, and F) attached to an integral membrane V0 proton pore complex (main component: the proteolipid protein).

It is found in the cytoplasmic vesicle membrane. Its subcellular location is the endosome membrane. It localises to the contractile vacuole membrane. Vacuolar ATPase is responsible for acidifying a variety of intracellular compartments in eukaryotic cells. The B subunit is non-catalytic but combines with other subunits to form the catalytic complex. V-ATPase is responsible for energizing electrophoretic K(+)/2H(+) antiport by generating a transmembrane voltage of more than 200 mV. The protein is V-type proton ATPase subunit B (vatB) of Dictyostelium discoideum (Social amoeba).